Reading from the N-terminus, the 1235-residue chain is Phosphorylase b kinase regulatory subunit alpha, liver isoform (1235 aa).

Phosphoserine occurs at positions 697, 731, and 737. The segment at 808–838 is calmodulin-binding; it reads LSELYGKAGLNQEWGLIRYISGLLRKKVEVL. A compositionally biased stretch (low complexity) spans 976–986; sequence SSASSPAISIH. The disordered stretch occupies residues 976-1002; the sequence is SSASSPAISIHEVGHTGVTKTERSGIN. Phosphoserine occurs at positions 984, 1016, and 1044. A compositionally biased stretch (low complexity) spans 1032-1053; that stretch reads AYSKSVRSSTPSSPTGTSSSDS. The disordered stretch occupies residues 1032–1060; the sequence is AYSKSVRSSTPSSPTGTSSSDSGGHHISW. The calmodulin-binding stretch occupies residues 1059-1099; sequence SWGERQGQWLRRRRLDGAINRVPVGFYQRVWKILQKCHGLS. The S-farnesyl cysteine moiety is linked to residue cysteine 1232.

This sequence belongs to the phosphorylase b kinase regulatory chain family. In terms of assembly, hexadecamer of 4 heterotetramers, each composed of alpha, beta, gamma, and delta subunits. Alpha (PHKA1 or PHKA2) and beta (PHKB) are regulatory subunits, gamma (PHKG1 or PHKG2) is the catalytic subunit, and delta is calmodulin. In terms of processing, although the final Cys may be farnesylated, the terminal tripeptide is probably not removed, and the C-terminus is not methylated. In terms of tissue distribution, predominantly expressed in liver and other non-muscle tissues.

It is found in the cell membrane. The protein operates within glycan biosynthesis; glycogen metabolism. By phosphorylation of various serine residues and by calcium. In terms of biological role, phosphorylase b kinase catalyzes the phosphorylation of serine in certain substrates, including troponin I. The alpha chain may bind calmodulin. In Oryctolagus cuniculus (Rabbit), this protein is Phosphorylase b kinase regulatory subunit alpha, liver isoform (PHKA2).